Consider the following 285-residue polypeptide: MVAQIIDGKKIAQQIKSEVAHLVQMRIKAGDAAPCLAVVLVGHDSASQMYVTSKRKTCESIGFISLAYDLPNNVSETELLMLIDQLNTNHSVDGILIQLPLPVGIDNIRVLEQIAPHKDVDGFHPYNLGRLCQRAPLLRPCTPRGVITLLERYNINIVGLNAVVVGASNIVGRPMGMELLLAGCTVTITHRFTRNLQQHVQNADLLVVAVGKAGFIPGSWIKSGAIVIDIGINCLDNGKVVGDVNFSEAIERAAYITPVPGGVGPMTVATLIQNTLQACKYRKLS.

NADP(+)-binding positions include 166-168 (GAS) and Ile232.

It belongs to the tetrahydrofolate dehydrogenase/cyclohydrolase family. As to quaternary structure, homodimer.

The catalysed reaction is (6R)-5,10-methylene-5,6,7,8-tetrahydrofolate + NADP(+) = (6R)-5,10-methenyltetrahydrofolate + NADPH. It carries out the reaction (6R)-5,10-methenyltetrahydrofolate + H2O = (6R)-10-formyltetrahydrofolate + H(+). Its pathway is one-carbon metabolism; tetrahydrofolate interconversion. Its function is as follows. Catalyzes the oxidation of 5,10-methylenetetrahydrofolate to 5,10-methenyltetrahydrofolate and then the hydrolysis of 5,10-methenyltetrahydrofolate to 10-formyltetrahydrofolate. The chain is Bifunctional protein FolD from Baumannia cicadellinicola subsp. Homalodisca coagulata.